The sequence spans 240 residues: Cysteine-rich secretory protein (240 aa).

The N-terminal stretch at 1–19 (MIAFIVLPILAAVLQQSSG) is a signal peptide. The SCP domain maps to 38–166 (VDLHNSLRRS…EYSYFYVCQY (129 aa)). Cystine bridges form between cysteine 75/cysteine 153, cysteine 92/cysteine 167, cysteine 148/cysteine 164, cysteine 186/cysteine 193, cysteine 189/cysteine 198, cysteine 202/cysteine 235, cysteine 211/cysteine 229, and cysteine 220/cysteine 233. Residues 202–235 (CTKEDKYSNCKSLVQQAGCQDKQMQSDCSAICFC) form the ShKT domain.

This sequence belongs to the CRISP family. In terms of tissue distribution, expressed by the venom gland.

The protein resides in the secreted. In terms of biological role, weakly blocks contraction of smooth muscle elicited by high potassium-induced depolarization, but does not block caffeine-stimulated contraction. May target voltage-gated calcium channels on smooth muscle. The protein is Cysteine-rich secretory protein of Crotalus adamanteus (Eastern diamondback rattlesnake).